Consider the following 70-residue polypeptide: Conotoxin Pl171 (70 aa).

The first 21 residues, 1-21 (MGMRMMFTMILLVVLVTTVVS), serve as a signal peptide directing secretion. 2 disulfide bridges follow: C54–C61 and C55–C67. F69 is subject to Phenylalanine amide.

The protein belongs to the conotoxin A superfamily. Expressed by the venom duct.

The protein resides in the secreted. Functionally, probable neurotoxin with unknown target. Possibly targets ion channels. The sequence is that of Conotoxin Pl171 from Conus planorbis (Planorbis cone).